A 903-amino-acid polypeptide reads, in one-letter code: HTH-type transcriptional regulator MalT (903 aa).

39-46 (CPAGYGKT) is a binding site for ATP. Residues 832 to 897 (ELIRTSPLTQ…EAVQQAQRLL (66 aa)) form the HTH luxR-type domain. Positions 856-875 (NDQIANELDVAATTIKTHIR) form a DNA-binding region, H-T-H motif.

The protein belongs to the MalT family. In terms of assembly, monomer in solution. Oligomerizes to an active state in the presence of the positive effectors ATP and maltotriose.

Its activity is regulated as follows. Activated by ATP and maltotriose, which are both required for DNA binding. In terms of biological role, positively regulates the transcription of the maltose regulon whose gene products are responsible for uptake and catabolism of malto-oligosaccharides. Specifically binds to the promoter region of its target genes, recognizing a short DNA motif called the MalT box. This chain is HTH-type transcriptional regulator MalT, found in Yersinia pseudotuberculosis serotype O:1b (strain IP 31758).